Reading from the N-terminus, the 135-residue chain is Nucleoside diphosphate kinase (135 aa).

ATP is bound by residues K10, F58, R86, T92, R103, and N113. H116 (pros-phosphohistidine intermediate) is an active-site residue.

It belongs to the NDK family. As to quaternary structure, homotetramer. Mg(2+) is required as a cofactor.

Its subcellular location is the cytoplasm. The catalysed reaction is a 2'-deoxyribonucleoside 5'-diphosphate + ATP = a 2'-deoxyribonucleoside 5'-triphosphate + ADP. It carries out the reaction a ribonucleoside 5'-diphosphate + ATP = a ribonucleoside 5'-triphosphate + ADP. Functionally, major role in the synthesis of nucleoside triphosphates other than ATP. The ATP gamma phosphate is transferred to the NDP beta phosphate via a ping-pong mechanism, using a phosphorylated active-site intermediate. The sequence is that of Nucleoside diphosphate kinase from Nocardioides sp. (strain ATCC BAA-499 / JS614).